The chain runs to 354 residues: Small ribosomal subunit protein uS2 (354 aa).

Belongs to the universal ribosomal protein uS2 family.

The polypeptide is Small ribosomal subunit protein uS2 (Methylorubrum populi (strain ATCC BAA-705 / NCIMB 13946 / BJ001) (Methylobacterium populi)).